The chain runs to 199 residues: MIQVEENEHIQTLVYQLNKEGKSICGDSFFMKADDKELICAVADGLGSGSLANESSAAIKDLVENYASEDVESIIERCNQAMKNKRGATASILKINFEQRQFTYCSVGNVRFILHSPSGESFYPLPISGYLSGKPQKYKTHTATYEKGSKFIIHTDGLNVPDIRSHLKKGQSVEEISNSLKMYTTSRKDDLTYILGQLS.

Residues 11-198 enclose the PPM-type phosphatase domain; the sequence is QTLVYQLNKE…DDLTYILGQL (188 aa).

It carries out the reaction O-phospho-L-serine + H2O = L-serine + phosphate. The enzyme catalyses O-phospho-D-serine + H2O = D-serine + phosphate. Functionally, negative regulator of sigma-B activity. Dephosphorylates RsbS. Plays a role both in maintaining low sigma-B activity during growth and in reestablishing prestress sigma-B activity after induction. Could have a negative feedback role by indirectly communicating sigma-B protein levels. In Bacillus subtilis (strain 168), this protein is Phosphoserine phosphatase RsbX (rsbX).